A 512-amino-acid polypeptide reads, in one-letter code: GMP synthase [glutamine-hydrolyzing] (512 aa).

The Glutamine amidotransferase type-1 domain maps to 7-197 (TIIVLDFGSQ…VFGVCGCSEG (191 aa)). Residue C84 is the Nucleophile of the active site. Catalysis depends on residues H171 and E173. A GMPS ATP-PPase domain is found at 198–387 (WNMENFIEVE…LGIPDEIVWR (190 aa)). 225-231 (SGGVDSS) provides a ligand contact to ATP.

Homodimer.

It carries out the reaction XMP + L-glutamine + ATP + H2O = GMP + L-glutamate + AMP + diphosphate + 2 H(+). Its pathway is purine metabolism; GMP biosynthesis; GMP from XMP (L-Gln route): step 1/1. Catalyzes the synthesis of GMP from XMP. The protein is GMP synthase [glutamine-hydrolyzing] of Bacillus cytotoxicus (strain DSM 22905 / CIP 110041 / 391-98 / NVH 391-98).